Reading from the N-terminus, the 202-residue chain is 3-isopropylmalate dehydratase small subunit (202 aa).

It belongs to the LeuD family. LeuD type 1 subfamily. Heterodimer of LeuC and LeuD.

It carries out the reaction (2R,3S)-3-isopropylmalate = (2S)-2-isopropylmalate. The protein operates within amino-acid biosynthesis; L-leucine biosynthesis; L-leucine from 3-methyl-2-oxobutanoate: step 2/4. Catalyzes the isomerization between 2-isopropylmalate and 3-isopropylmalate, via the formation of 2-isopropylmaleate. The chain is 3-isopropylmalate dehydratase small subunit from Rhizobium johnstonii (strain DSM 114642 / LMG 32736 / 3841) (Rhizobium leguminosarum bv. viciae).